The primary structure comprises 284 residues: 2-dehydro-3-deoxyphosphooctonate aldolase (284 aa).

It belongs to the KdsA family.

The protein resides in the cytoplasm. It catalyses the reaction D-arabinose 5-phosphate + phosphoenolpyruvate + H2O = 3-deoxy-alpha-D-manno-2-octulosonate-8-phosphate + phosphate. It functions in the pathway carbohydrate biosynthesis; 3-deoxy-D-manno-octulosonate biosynthesis; 3-deoxy-D-manno-octulosonate from D-ribulose 5-phosphate: step 2/3. Its pathway is bacterial outer membrane biogenesis; lipopolysaccharide biosynthesis. In Salmonella arizonae (strain ATCC BAA-731 / CDC346-86 / RSK2980), this protein is 2-dehydro-3-deoxyphosphooctonate aldolase.